A 170-amino-acid chain; its full sequence is Probable chorismate pyruvate-lyase (170 aa).

Residues Arg-77, Leu-114, and Glu-157 each coordinate substrate.

The protein belongs to the UbiC family.

It localises to the cytoplasm. It catalyses the reaction chorismate = 4-hydroxybenzoate + pyruvate. It functions in the pathway cofactor biosynthesis; ubiquinone biosynthesis. Removes the pyruvyl group from chorismate, with concomitant aromatization of the ring, to provide 4-hydroxybenzoate (4HB) for the ubiquinone pathway. The sequence is that of Probable chorismate pyruvate-lyase from Pasteurella multocida (strain Pm70).